A 418-amino-acid polypeptide reads, in one-letter code: UDP-N-acetylglucosamine 1-carboxyvinyltransferase (418 aa).

A phosphoenolpyruvate-binding site is contributed by 22–23 (KN). Arg93 is a binding site for UDP-N-acetyl-alpha-D-glucosamine. Cys117 serves as the catalytic Proton donor. Cys117 is subject to 2-(S-cysteinyl)pyruvic acid O-phosphothioketal. Asp306 and Ile328 together coordinate UDP-N-acetyl-alpha-D-glucosamine.

Belongs to the EPSP synthase family. MurA subfamily.

The protein resides in the cytoplasm. The catalysed reaction is phosphoenolpyruvate + UDP-N-acetyl-alpha-D-glucosamine = UDP-N-acetyl-3-O-(1-carboxyvinyl)-alpha-D-glucosamine + phosphate. It functions in the pathway cell wall biogenesis; peptidoglycan biosynthesis. In terms of biological role, cell wall formation. Adds enolpyruvyl to UDP-N-acetylglucosamine. This is UDP-N-acetylglucosamine 1-carboxyvinyltransferase from Hydrogenovibrio crunogenus (strain DSM 25203 / XCL-2) (Thiomicrospira crunogena).